A 119-amino-acid chain; its full sequence is Probable prefoldin subunit 6 (119 aa).

It belongs to the prefoldin subunit beta family. In terms of assembly, heterohexamer of two PFD-alpha type and four PFD-beta type subunits. May interact with MSP1.

Functionally, binds specifically to cytosolic chaperonin (c-CPN) and transfers target proteins to it. Binds to nascent polypeptide chain and promotes folding in an environment in which there are many competing pathways for nonnative proteins. The sequence is that of Probable prefoldin subunit 6 from Plasmodium falciparum (isolate 3D7).